The chain runs to 196 residues: Probable histone chaperone ASF1A (196 aa).

A compositionally biased stretch (basic and acidic residues) spans 146-157 (VTKFPIDFHPEE). The segment at 146–196 (VTKFPIDFHPEEEQTAATAAPPEQSDEQQPNVNGEAQVLPDQSVEPKPEES) is disordered.

Belongs to the ASF1 family. As to quaternary structure, interacts with histone H3 and histone H4. Component of the HIRA complex made of UBN1, UBN2, ASF1A, CABIN1 and HIRA. Interacts with HIRA. As to expression, expressed in leaves and flower buds.

It localises to the nucleus. The protein localises to the nucleolus. In terms of biological role, histone chaperone that facilitates histone deposition and histone exchange and removal during nucleosome assembly and disassembly. While encoded by a region of the Arabidopsis thaliana genome that is homologous to the Brassica S-locus for self incompatibility, this protein may not play the same role in Arabidopsis thaliana. This is Probable histone chaperone ASF1A (ASF1A) from Arabidopsis thaliana (Mouse-ear cress).